We begin with the raw amino-acid sequence, 151 residues long: Large ribosomal subunit protein bL9 (151 aa).

This sequence belongs to the bacterial ribosomal protein bL9 family.

In terms of biological role, binds to the 23S rRNA. This chain is Large ribosomal subunit protein bL9, found in Desulfotalea psychrophila (strain LSv54 / DSM 12343).